The following is a 158-amino-acid chain: Small ribosomal subunit protein uS7 (158 aa).

The protein belongs to the universal ribosomal protein uS7 family. Part of the 30S ribosomal subunit. Contacts proteins S9 and S11.

Functionally, one of the primary rRNA binding proteins, it binds directly to 16S rRNA where it nucleates assembly of the head domain of the 30S subunit. Is located at the subunit interface close to the decoding center, probably blocks exit of the E-site tRNA. This is Small ribosomal subunit protein uS7 from Granulibacter bethesdensis (strain ATCC BAA-1260 / CGDNIH1).